A 153-amino-acid chain; its full sequence is Aspartate carbamoyltransferase regulatory chain (153 aa).

Residues Cys109, Cys114, Cys138, and Cys141 each contribute to the Zn(2+) site.

The protein belongs to the PyrI family. Contains catalytic and regulatory chains. It depends on Zn(2+) as a cofactor.

In terms of biological role, involved in allosteric regulation of aspartate carbamoyltransferase. In Klebsiella pneumoniae subsp. pneumoniae (strain ATCC 700721 / MGH 78578), this protein is Aspartate carbamoyltransferase regulatory chain.